We begin with the raw amino-acid sequence, 201 residues long: Potassium-transporting ATPase KdpC subunit (201 aa).

The chain crosses the membrane as a helical span at residues 17-37 (LLTGLAYPLAMTGLAGILFPV).

It belongs to the KdpC family. In terms of assembly, the system is composed of three essential subunits: KdpA, KdpB and KdpC.

Its subcellular location is the cell inner membrane. Part of the high-affinity ATP-driven potassium transport (or Kdp) system, which catalyzes the hydrolysis of ATP coupled with the electrogenic transport of potassium into the cytoplasm. This subunit acts as a catalytic chaperone that increases the ATP-binding affinity of the ATP-hydrolyzing subunit KdpB by the formation of a transient KdpB/KdpC/ATP ternary complex. The polypeptide is Potassium-transporting ATPase KdpC subunit (Methylobacterium nodulans (strain LMG 21967 / CNCM I-2342 / ORS 2060)).